Reading from the N-terminus, the 122-residue chain is Large ribosomal subunit protein uL14c (122 aa).

This sequence belongs to the universal ribosomal protein uL14 family. Part of the 50S ribosomal subunit.

The protein localises to the plastid. Its subcellular location is the chloroplast. Binds to 23S rRNA. In Acorus calamus (Sweet flag), this protein is Large ribosomal subunit protein uL14c.